The sequence spans 392 residues: Probable protein phosphatase 2C 78 (392 aa).

The PPM-type phosphatase domain maps to 39–342 (ASGEYSIAVA…DDITVVVVYL (304 aa)). Positions 73, 74, 274, and 333 each coordinate Mn(2+).

Belongs to the PP2C family. Mg(2+) is required as a cofactor. The cofactor is Mn(2+).

The enzyme catalyses O-phospho-L-seryl-[protein] + H2O = L-seryl-[protein] + phosphate. It catalyses the reaction O-phospho-L-threonyl-[protein] + H2O = L-threonyl-[protein] + phosphate. This is Probable protein phosphatase 2C 78 from Oryza sativa subsp. japonica (Rice).